The following is a 174-amino-acid chain: Adipose-secreted signaling protein (174 aa).

Ala-2 bears the N-acetylalanine mark. Phosphothreonine is present on Thr-147.

The protein belongs to the ADISSP family.

Its subcellular location is the secreted. In terms of biological role, adipocyte-secreted protein (adipokine) that acts as a key regulator for white adipose tissue (WAT) thermogenesis and glucose homeostasis at least in part through activation of protein kinase A (PKA). The sequence is that of Adipose-secreted signaling protein from Bos taurus (Bovine).